The primary structure comprises 221 residues: MKNGLTFALPKGTLFPDTVRLLYKAGFLKKEEVLLESRKLVIKDGPYTFIICRPTDIPTFVEHGAADLGIVGKDVIEEQRREIFELLDLKYGKCHFAVAAPRDNPKVHDLGKLTEVRAASKFPEVTRRFFKGLGVRAEVIKMHGNVELAPLVGLADVIVDLVSTGRTLRENNLIEITKIMDITARLVANRVAARVYDREIKAIVKKFKNLVGGEKNEVNLK.

Belongs to the ATP phosphoribosyltransferase family. Short subfamily. As to quaternary structure, heteromultimer composed of HisG and HisZ subunits.

The protein resides in the cytoplasm. It carries out the reaction 1-(5-phospho-beta-D-ribosyl)-ATP + diphosphate = 5-phospho-alpha-D-ribose 1-diphosphate + ATP. Its pathway is amino-acid biosynthesis; L-histidine biosynthesis; L-histidine from 5-phospho-alpha-D-ribose 1-diphosphate: step 1/9. Catalyzes the condensation of ATP and 5-phosphoribose 1-diphosphate to form N'-(5'-phosphoribosyl)-ATP (PR-ATP). Has a crucial role in the pathway because the rate of histidine biosynthesis seems to be controlled primarily by regulation of HisG enzymatic activity. This chain is ATP phosphoribosyltransferase, found in Carboxydothermus hydrogenoformans (strain ATCC BAA-161 / DSM 6008 / Z-2901).